A 276-amino-acid chain; its full sequence is Glucosamine-6-phosphate deaminase 2 (276 aa).

Asp-72 (proton acceptor; for enolization step) is an active-site residue. The stretch at 105-130 (HILDGNAADLQAECDAFENKIKEAGG) forms a coiled coil. The For ring-opening step role is filled by Asp-141. His-143 acts as the Proton acceptor; for ring-opening step in catalysis. Glu-148 functions as the For ring-opening step in the catalytic mechanism. A Phosphothreonine modification is found at Thr-161.

This sequence belongs to the glucosamine/galactosamine-6-phosphate isomerase family. Homohexamer. In terms of tissue distribution, ubiquitous, with highest expression detected in testis, ovary, placenta, and heart.

It is found in the cytoplasm. It carries out the reaction alpha-D-glucosamine 6-phosphate + H2O = beta-D-fructose 6-phosphate + NH4(+). It participates in nucleotide-sugar biosynthesis; UDP-N-acetyl-alpha-D-glucosamine biosynthesis; alpha-D-glucosamine 6-phosphate from D-fructose 6-phosphate: step 1/1. With respect to regulation, allosterically activated by N-acetylglucosamine-6-phosphate (GlcNAc6P). Functionally, catalyzes the reversible conversion of alpha-D-glucosamine 6-phosphate (GlcN-6P) into beta-D-fructose 6-phosphate (Fru-6P) and ammonium ion, a regulatory reaction step in de novo uridine diphosphate-N-acetyl-alpha-D-glucosamine (UDP-GlcNAc) biosynthesis via hexosamine pathway. Deamination is coupled to aldo-keto isomerization mediating the metabolic flux from UDP-GlcNAc toward Fru-6P. At high ammonium level can drive amination and isomerization of Fru-6P toward hexosamines and UDP-GlcNAc synthesis. Has a role in fine tuning the metabolic fluctuations of cytosolic UDP-GlcNAc and their effects on hyaluronan synthesis that occur during tissue remodeling. This is Glucosamine-6-phosphate deaminase 2 from Homo sapiens (Human).